The primary structure comprises 585 residues: Aspartate--tRNA(Asp/Asn) ligase (585 aa).

E175 is an L-aspartate binding site. Residues 199–202 (QLFK) form an aspartate region. Residue R221 coordinates L-aspartate. Residues 221 to 223 (RDE) and Q230 each bind ATP. H448 lines the L-aspartate pocket. An ATP-binding site is contributed by E482. Position 489 (R489) interacts with L-aspartate. ATP is bound at residue 534–537 (GLDR).

Belongs to the class-II aminoacyl-tRNA synthetase family. Type 1 subfamily. Homodimer.

It is found in the cytoplasm. The enzyme catalyses tRNA(Asx) + L-aspartate + ATP = L-aspartyl-tRNA(Asx) + AMP + diphosphate. Functionally, aspartyl-tRNA synthetase with relaxed tRNA specificity since it is able to aspartylate not only its cognate tRNA(Asp) but also tRNA(Asn). Reaction proceeds in two steps: L-aspartate is first activated by ATP to form Asp-AMP and then transferred to the acceptor end of tRNA(Asp/Asn). In Natranaerobius thermophilus (strain ATCC BAA-1301 / DSM 18059 / JW/NM-WN-LF), this protein is Aspartate--tRNA(Asp/Asn) ligase.